Here is a 487-residue protein sequence, read N- to C-terminus: Protein NEN2 (487 aa).

One can recognise an Exonuclease domain in the interval 18–179 (FFDVETTIPF…LDDVRMNFEV (162 aa)). Mg(2+)-binding residues include D20 and E22. Catalysis depends on H167, which acts as the Proton donor/acceptor. D172 is a Mg(2+) binding site. Disordered stretches follow at residues 200-233 (NSVTTTTPETSSRRRRTIKKSPLQSPTDQQTGEN) and 269-291 (SDVPMEEEQNQQSETVASEGTGD). A compositionally biased stretch (polar residues) spans 221-233 (PLQSPTDQQTGEN).

The cofactor is Mg(2+). As to expression, expressed in the sieve elements and phloem pole pericycle cells.

Its subcellular location is the cytoplasm. It localises to the nucleus. Functionally, probable exonuclease involved in enuclation of sieve elements. In Arabidopsis thaliana (Mouse-ear cress), this protein is Protein NEN2.